The primary structure comprises 90 residues: Mitochondrial import inner membrane translocase subunit Tim10-B (90 aa).

The Twin CX3C motif signature appears at 29 to 54 (CHKKCVPPHYKEAELSKGESVCLDRC). Disulfide bonds link C29-C54 and C33-C50.

The protein belongs to the small Tim family. As to quaternary structure, heterohexamer; composed of 3 copies of TIMM9 and 3 copies of TIMM10/TIM10A, named soluble 70 kDa complex. The complex forms a 6-bladed alpha-propeller structure and associates with the TIMM22 component of the TIM22 complex. Interacts with multi-pass transmembrane proteins in transit.

It is found in the mitochondrion inner membrane. Its function is as follows. Mitochondrial intermembrane chaperone that participates in the import and insertion of multi-pass transmembrane proteins into the mitochondrial inner membrane. May also be required for the transfer of beta-barrel precursors from the TOM complex to the sorting and assembly machinery (SAM complex) of the outer membrane. Acts as a chaperone-like protein that protects the hydrophobic precursors from aggregation and guide them through the mitochondrial intermembrane space. The protein is Mitochondrial import inner membrane translocase subunit Tim10-B (timm10-b) of Xenopus laevis (African clawed frog).